Here is a 218-residue protein sequence, read N- to C-terminus: MIP18 family protein galla-1 (218 aa).

A disordered region spans residues 1 to 59 (MLSYIKRKLSESDSGVSSVATVTSSCGGDSGRAGGTGSSESGTGSSSASISGRSQNADE). A compositionally biased stretch (low complexity) spans 12–27 (SDSGVSSVATVTSSCG). Residue Ser-14 is modified to Phosphoserine. Over residues 28–37 (GDSGRAGGTG) the composition is skewed to gly residues. Over residues 38-54 (SSESGTGSSSASISGRS) the composition is skewed to low complexity. At Ser-65 the chain carries Phosphoserine.

The protein belongs to the MIP18 family. Component of the CGX complex composed of crb, galla (galla-1 or galla-2) and Xpd. Interacts with crb (via intracellular domain). Is not able to interact with Xpd in the absence of crb.

It localises to the apical cell membrane. Its subcellular location is the cytoplasm. It is found in the cytoskeleton. The protein resides in the spindle. In terms of biological role, component of the crb-galla-Xpd (CGX) complex which is essential for proper mitotic chromosome segregation in early embryos. The CGX complex is also required for cell proliferation in developing wing disks. In the CGX complex, acts with crb to recruit Xpd thus forming the functional complex. This is MIP18 family protein galla-1 from Drosophila melanogaster (Fruit fly).